We begin with the raw amino-acid sequence, 137 residues long: Protein LTO1 homolog (137 aa).

At A2 the chain carries N-acetylalanine. Positions 22 to 58 are deca-GX3 motif; required for interaction with YAE1 and the CIA complex; that stretch reads GYQEGYEEGSSLGIVEGKRYGMVHGAKIGSEIGCYRG.

It belongs to the LTO1 family. In terms of assembly, forms a complex with YAE1. Interacts with PYCR1 and PYCR2.

It is found in the nucleus. Its function is as follows. The complex LTO1:YAE1 functions as a target specific adapter that probably recruits apo-ABCE1 to the cytosolic iron-sulfur protein assembly (CIA) complex machinery. May be required for biogenesis of the large ribosomal subunit and initiation of translation. May play a role in the regulation of proline metabolism and ROS production. The chain is Protein LTO1 homolog from Mus musculus (Mouse).